The primary structure comprises 506 residues: Acetylcholine receptor subunit gamma (506 aa).

The signal sequence occupies residues 1–17; it reads MVLTLLLIICLALEVRS. At 18-235 the chain is on the extracellular side; the sequence is ENEEGRLIEK…IIFFLIIQRK (218 aa). N-linked (GlcNAc...) asparagine glycosylation is present at Asn85. A disulfide bridge connects residues Cys145 and Cys159. 3 consecutive transmembrane segments (helical) span residues 236–260, 269–287, and 303–324; these read PLFY…VYFL, CTLS…FLIA, and YLIF…VLNV. Residues 325 to 466 are Cytoplasmic-facing; that stretch reads SLRTPNTHSL…WVLIGKVIDK (142 aa). Residue Tyr381 is modified to Phosphotyrosine; by Tyr-kinases. A helical membrane pass occupies residues 467–490; it reads ACFWIALLLFSIGTLAIFLTGHFN.

Belongs to the ligand-gated ion channel (TC 1.A.9) family. Acetylcholine receptor (TC 1.A.9.1) subfamily. Gamma/CHRNG sub-subfamily. Pentamer of two alpha chains, and one each of the beta, delta, and gamma chains. In terms of processing, seems not to be glycosylated on Asn-158.

It localises to the postsynaptic cell membrane. Its subcellular location is the cell membrane. The catalysed reaction is K(+)(in) = K(+)(out). The enzyme catalyses Na(+)(in) = Na(+)(out). After binding acetylcholine, the AChR responds by an extensive change in conformation that affects all subunits and leads to opening of an ion-conducting channel across the plasma membrane. This chain is Acetylcholine receptor subunit gamma (CHRNG), found in Tetronarce californica (Pacific electric ray).